We begin with the raw amino-acid sequence, 153 residues long: Protein DpnD (153 aa).

This chain is Protein DpnD, found in Streptococcus pneumoniae serotype 4 (strain ATCC BAA-334 / TIGR4).